Here is a 24-residue protein sequence, read N- to C-terminus: MKWETPTATDLRFGFEITMYVSAR.

The pyrroloquinoline quinone (Glu-Tyr) cross-link spans 16–20; sequence EITMY.

It belongs to the PqqA family.

The protein operates within cofactor biosynthesis; pyrroloquinoline quinone biosynthesis. Its function is as follows. Required for coenzyme pyrroloquinoline quinone (PQQ) biosynthesis. PQQ is probably formed by cross-linking a specific glutamate to a specific tyrosine residue and excising these residues from the peptide. This is Coenzyme PQQ synthesis protein A from Variovorax paradoxus (strain S110).